The primary structure comprises 327 residues: Autoinducer 2 import system permease protein LsrD (327 aa).

Helical transmembrane passes span 3 to 23 (LNWE…FGAI), 41 to 61 (ICIG…GIDI), 63 to 83 (LGST…FGLP), 86 to 106 (LAVP…AALI), 114 to 134 (LVIT…LSGL), 158 to 178 (VLGL…FWLI), 211 to 231 (ALYG…VSYF), 257 to 277 (IYGG…VGYL), and 283 to 303 (MVGI…VVVV).

Belongs to the binding-protein-dependent transport system permease family. AraH/RbsC subfamily. The complex is composed of two ATP-binding proteins (LsrA), two transmembrane proteins (LsrC and LsrD) and a solute-binding protein (LsrB).

The protein resides in the cell inner membrane. In terms of biological role, part of the ABC transporter complex LsrABCD involved in autoinducer 2 (AI-2) import. Probably responsible for the translocation of the substrate across the membrane. The chain is Autoinducer 2 import system permease protein LsrD (lsrD) from Enterobacter sp. (strain 638).